Reading from the N-terminus, the 86-residue chain is Cell division topological specificity factor (86 aa).

Belongs to the MinE family.

In terms of biological role, prevents the cell division inhibition by proteins MinC and MinD at internal division sites while permitting inhibition at polar sites. This ensures cell division at the proper site by restricting the formation of a division septum at the midpoint of the long axis of the cell. The polypeptide is Cell division topological specificity factor (Shewanella woodyi (strain ATCC 51908 / MS32)).